A 579-amino-acid polypeptide reads, in one-letter code: Keratinocyte proline-rich protein (579 aa).

Phosphoserine is present on Ser-394. Positions 526-579 (EAPYCGPSSYNQGQESGAGCGPGDVFPERRGQDGHGDQGNAFAGVKGEAKSAYF) are disordered. A compositionally biased stretch (basic and acidic residues) spans 551–561 (FPERRGQDGHG).

As to expression, expressed in the upper layer of epidermis and psoriasis (at protein level). Expressed in the upper layer of epidermis and psoriasis.

The protein localises to the cytoplasm. The sequence is that of Keratinocyte proline-rich protein (KPRP) from Homo sapiens (Human).